The sequence spans 132 residues: uncharacterized protein (132 aa).

The next 4 helical transmembrane spans lie at 6–26, 34–54, 59–79, and 106–126; these read WIYAVFTILIIGLGLGSRAFS, NTYLGDSLWAAMIFTGCGFLF, TMITGIISLSFCFVIEFSQLY, and IEAYTIGIAACAAIELLVLGI.

The protein resides in the cell membrane. This is an uncharacterized protein from Bacillus subtilis (strain 168).